A 389-amino-acid chain; its full sequence is Chalcone synthase 1 (389 aa).

Cys164 is a catalytic residue.

It belongs to the thiolase-like superfamily. Chalcone/stilbene synthases family.

The enzyme catalyses (E)-4-coumaroyl-CoA + 3 malonyl-CoA + 3 H(+) = 2',4,4',6'-tetrahydroxychalcone + 3 CO2 + 4 CoA. It functions in the pathway secondary metabolite biosynthesis; flavonoid biosynthesis. Functionally, the primary product of this enzyme is 4,2',4',6'-tetrahydroxychalcone (also termed naringenin-chalcone or chalcone) which can under specific conditions spontaneously isomerize into naringenin. The sequence is that of Chalcone synthase 1 (CHS1) from Cicer arietinum (Chickpea).